We begin with the raw amino-acid sequence, 261 residues long: Acyl-[acyl-carrier-protein]--UDP-N-acetylglucosamine O-acyltransferase (261 aa).

It belongs to the transferase hexapeptide repeat family. LpxA subfamily. As to quaternary structure, homotrimer.

Its subcellular location is the cytoplasm. The enzyme catalyses a (3R)-hydroxyacyl-[ACP] + UDP-N-acetyl-alpha-D-glucosamine = a UDP-3-O-[(3R)-3-hydroxyacyl]-N-acetyl-alpha-D-glucosamine + holo-[ACP]. It participates in glycolipid biosynthesis; lipid IV(A) biosynthesis; lipid IV(A) from (3R)-3-hydroxytetradecanoyl-[acyl-carrier-protein] and UDP-N-acetyl-alpha-D-glucosamine: step 1/6. Functionally, involved in the biosynthesis of lipid A, a phosphorylated glycolipid that anchors the lipopolysaccharide to the outer membrane of the cell. This is Acyl-[acyl-carrier-protein]--UDP-N-acetylglucosamine O-acyltransferase from Aquifex aeolicus (strain VF5).